A 156-amino-acid chain; its full sequence is Small ribosomal subunit protein uS7 (156 aa).

Belongs to the universal ribosomal protein uS7 family. In terms of assembly, part of the 30S ribosomal subunit. Contacts proteins S9 and S11.

In terms of biological role, one of the primary rRNA binding proteins, it binds directly to 16S rRNA where it nucleates assembly of the head domain of the 30S subunit. Is located at the subunit interface close to the decoding center, probably blocks exit of the E-site tRNA. The polypeptide is Small ribosomal subunit protein uS7 (Buchnera aphidicola subsp. Baizongia pistaciae (strain Bp)).